Reading from the N-terminus, the 269-residue chain is Glutamate racemase (269 aa).

Residues 14 to 15 (DS) and 46 to 47 (YS) each bind substrate. The Proton donor/acceptor role is filled by cysteine 78. 79 to 80 (NT) serves as a coordination point for substrate. The active-site Proton donor/acceptor is cysteine 189. 190–191 (TH) lines the substrate pocket.

This sequence belongs to the aspartate/glutamate racemases family.

It carries out the reaction L-glutamate = D-glutamate. It participates in cell wall biogenesis; peptidoglycan biosynthesis. Functionally, provides the (R)-glutamate required for cell wall biosynthesis. The polypeptide is Glutamate racemase (Haemophilus influenzae (strain 86-028NP)).